The chain runs to 183 residues: MSRAGLEVLIRRVDPDVPLPAYAQPGDAGADLRTTVERELAPGERAVLPTGVSVALPEGYAAFVHPRSGLAARCGVALVNAPGTIDAGYRGEIKVIVVNLDPRESVRFERFDRIAQLVVQQVERVRFRQVAELPGSARAEGGFGSTGGHAGLDPASGTSGQVAEGGPTGGNRYASVVSDREGQ.

Residues 67-69, Asn80, 84-86, and Lys94 contribute to the substrate site; these read RSG and TID. A disordered region spans residues 138 to 183; that stretch reads RAEGGFGSTGGHAGLDPASGTSGQVAEGGPTGGNRYASVVSDREGQ. Positions 141–150 are enriched in gly residues; it reads GGFGSTGGHA.

The protein belongs to the dUTPase family. Mg(2+) is required as a cofactor.

The enzyme catalyses dUTP + H2O = dUMP + diphosphate + H(+). It participates in pyrimidine metabolism; dUMP biosynthesis; dUMP from dCTP (dUTP route): step 2/2. In terms of biological role, this enzyme is involved in nucleotide metabolism: it produces dUMP, the immediate precursor of thymidine nucleotides and it decreases the intracellular concentration of dUTP so that uracil cannot be incorporated into DNA. The sequence is that of Deoxyuridine 5'-triphosphate nucleotidohydrolase from Streptomyces coelicolor (strain ATCC BAA-471 / A3(2) / M145).